The chain runs to 1380 residues: DNA-directed RNA polymerase subunit beta (1380 aa).

Belongs to the RNA polymerase beta chain family. In terms of assembly, the RNAP catalytic core consists of 2 alpha, 1 beta, 1 beta' and 1 omega subunit. When a sigma factor is associated with the core the holoenzyme is formed, which can initiate transcription.

The catalysed reaction is RNA(n) + a ribonucleoside 5'-triphosphate = RNA(n+1) + diphosphate. In terms of biological role, DNA-dependent RNA polymerase catalyzes the transcription of DNA into RNA using the four ribonucleoside triphosphates as substrates. The protein is DNA-directed RNA polymerase subunit beta of Sinorhizobium fredii (strain NBRC 101917 / NGR234).